The following is a 153-amino-acid chain: UPF0179 protein AF_2154 (153 aa).

Belongs to the UPF0179 family.

This chain is UPF0179 protein AF_2154, found in Archaeoglobus fulgidus (strain ATCC 49558 / DSM 4304 / JCM 9628 / NBRC 100126 / VC-16).